Reading from the N-terminus, the 278-residue chain is Large ribosomal subunit protein uL2 (278 aa).

Residues His-201–Lys-278 form a disordered region. Over residues Gly-210–Val-221 the composition is skewed to basic residues.

Belongs to the universal ribosomal protein uL2 family. In terms of assembly, part of the 50S ribosomal subunit. Forms a bridge to the 30S subunit in the 70S ribosome.

Its function is as follows. One of the primary rRNA binding proteins. Required for association of the 30S and 50S subunits to form the 70S ribosome, for tRNA binding and peptide bond formation. It has been suggested to have peptidyltransferase activity; this is somewhat controversial. Makes several contacts with the 16S rRNA in the 70S ribosome. This is Large ribosomal subunit protein uL2 from Allorhizobium ampelinum (strain ATCC BAA-846 / DSM 112012 / S4) (Agrobacterium vitis (strain S4)).